A 127-amino-acid polypeptide reads, in one-letter code: Alkaline proteinase inhibitor (127 aa).

The first 26 residues, 1–26 (MNINYFVRIVPVAVVLLVGISGASMA), serve as a signal peptide directing secretion. Cysteines 53 and 70 form a disulfide.

Belongs to the protease inhibitor I38 family.

The protein localises to the periplasm. Its function is as follows. Inhibitor of the alkaline protease. This is Alkaline proteinase inhibitor (inh) from Pseudomonas syringae pv. tomato (strain ATCC BAA-871 / DC3000).